A 300-amino-acid chain; its full sequence is MRDPVLFAIPCFLLLLILEWTAARKLESIETAATGQPRPASGAYLTRDSVASISMGLVSIATTAGWKSLALLGYAAIYAYLAPWQLSAHRWYTWVIAIVGVDLLYYSYHRIAHRVRLIWATHQAHHSSEYFNFATALRQKWNNSGEILMWVPLPLMGLPPWMVFCSWSLNLIYQFWVHTERIDRLPRWFEFVFNTPSHHRVHHGMDPVYLDKNYGGILIIWDRLFGSFQPELFRPHYGLTKRVDTFNIWKLQTREYVAIVRDWRSATRLRDRLGYVFGPPGWEPRTIDKSNAAASLVTSR.

The next 4 membrane-spanning stretches (helical) occupy residues Asp3–Ala23, Ser68–Ala88, Trp91–Ile111, and Ile147–Trp167. The Fatty acid hydroxylase domain maps to Trp94 to Ser227.

Belongs to the sterol desaturase family.

The protein resides in the cell membrane. This chain is C-5 sterol desaturase (erg3), found in Mycobacterium bovis (strain ATCC BAA-935 / AF2122/97).